Here is a 365-residue protein sequence, read N- to C-terminus: Peridinin-chlorophyll a-binding protein, chloroplastic (365 aa).

A chloroplast-targeting transit peptide spans 1-52 (MVRGARKAIAVGVAVAVACGLQKHLNFVPGPRHAAPVAAAAASMMMAPAAFA). A run of 2 repeats spans residues 53 to 215 (DEIG…VPSG) and 216 to 365 (DKIG…ASQR).

Monomer.

Its subcellular location is the plastid. It localises to the chloroplast. Functionally, water-soluble antenna for capture of solar energy in the blue-green range. Peridinin is an asymmetric carotenoid. The chain is Peridinin-chlorophyll a-binding protein, chloroplastic from Symbiodinium sp. (Dinoflagellate).